Reading from the N-terminus, the 105-residue chain is Small ribosomal subunit protein uS10 (105 aa).

The protein belongs to the universal ribosomal protein uS10 family. In terms of assembly, part of the 30S ribosomal subunit.

Involved in the binding of tRNA to the ribosomes. The chain is Small ribosomal subunit protein uS10 from Rickettsia akari (strain Hartford).